The chain runs to 554 residues: Perforin-1 (554 aa).

The first 20 residues, 1–20 (MATCLFLLGLFLLLPRPVPA), serve as a signal peptide directing secretion. Disulfide bonds link cysteine 22/cysteine 75, cysteine 30/cysteine 72, and cysteine 101/cysteine 175. Residues 26 to 374 (TRSECKQKHK…HYIMSRARWQ (349 aa)) enclose the MACPF domain. A beta stranded transmembrane segment spans residues 128–148 (WRVGLDVNPRPEANMRASVAG). Asparagine 204 carries an N-linked (GlcNAc...) asparagine glycan. Cystine bridges form between cysteine 241–cysteine 407, cysteine 376–cysteine 392, cysteine 380–cysteine 394, and cysteine 396–cysteine 406. The beta stranded transmembrane segment at 256–278 (CLNVEAQVSIGAQASVSSEYKAC) threads the bilayer. N-linked (GlcNAc...) asparagine glycosylation occurs at asparagine 375. An EGF-like domain is found at 375 to 407 (NCSRPCRSGQHKSSHDSCQCECQDSKVTNQDCC). One can recognise a C2 domain in the interval 395–513 (ECQDSKVTNQ…FHEVTCELNH (119 aa)). Positions 428, 429, 432, 433, 435, 454, 467, 483, 484, 485, 488, 489, 490, and 491 each coordinate Ca(2+). 2 cysteine pairs are disulfide-bonded: cysteine 496–cysteine 509 and cysteine 524–cysteine 533. Asparagine 548 is a glycosylation site (N-linked (GlcNAc...) asparagine).

Belongs to the complement C6/C7/C8/C9 family. In terms of assembly, monomer, as soluble protein. Homooligomer; homooligomerizes to form a pore-forming ring. Ca(2+) is required as a cofactor. Post-translationally, N-glycosylated. The glycosylation sites are facing the interior of the pore. Detected in cytotoxic T-lymphocytes and natural killer cells.

The protein resides in the cytolytic granule. The protein localises to the secreted. It is found in the cell membrane. It localises to the endosome lumen. Functionally, pore-forming protein that plays a key role in granzyme-mediated programmed cell death, and in defense against virus-infected or neoplastic cells. Can insert into the membrane of target cells in its calcium-bound form, oligomerize and form large pores. Promotes cytolysis and apoptosis of target cells by mediating the passage and uptake of cytotoxic granzymes. Facilitates the delivery of cationic cargo protein, while anionic or neural proteins are not delivered efficiently. Perforin pores allow the release of mature caspase-7 (CASP7) into the extracellular milieu. This is Perforin-1 (Prf1) from Mus musculus (Mouse).